The chain runs to 487 residues: MKAQPKASHFIDGEYVEDTDGTVIESLYPATGEVIARLHAATPAIVERAIAAAKRAQPEWAAMSPMARGRILKRAADIMRERNRVLSELETLDTGKPIQETVVADPTSGADAFEFFGGIAPAGLNGSHIPLGQDFAYTKRVPLGVCVGIGAWNYPQQIACWKAAPALVCGNAMVFKPSENTPLGALKIAEILHEAGLPKGLFNVIQGDRDTGPLLVNHPDVAKVSLTGSVPTGRRVAAAAAGNLKHVTMELGGKSPLVVFDDADLDSAVGGAMLGNFYSTGQVCSNGTRVFVQKTIKDEFLKRLKVRTEAMLIGDPMDEATQVGPMVSWAQREKVISYIEKGKAEGATLIAGGGIPNNVSGEGYYVQPTVFADVTDDMTIAREEIFGPVMCVLDFDAEDEVIARANASEFGLSGGVFTADLTRAHRVVDRLEAGTLWINTYNLCPVEIPFGGSKQSGFGRENSLAALEHYSELKTVYVGMGPVVAPY.

K(+) is bound by residues S26 and D93. An NAD(+)-binding site is contributed by G150 to W152. The Charge relay system role is filled by K162. Residues K176–E179 and S229–T232 contribute to the NAD(+) site. Residue L244 coordinates K(+). Residue E250 is the Proton acceptor of the active site. 3 residues coordinate NAD(+): G252, C284, and E384. Catalysis depends on C284, which acts as the Nucleophile. C284 bears the Cysteine sulfenic acid (-SOH) mark. The K(+) site is built by K454 and G457. The active-site Charge relay system is E461.

The protein belongs to the aldehyde dehydrogenase family. Dimer of dimers. K(+) is required as a cofactor.

It carries out the reaction betaine aldehyde + NAD(+) + H2O = glycine betaine + NADH + 2 H(+). Its pathway is amine and polyamine biosynthesis; betaine biosynthesis via choline pathway; betaine from betaine aldehyde: step 1/1. Involved in the biosynthesis of the osmoprotectant glycine betaine. Catalyzes the irreversible oxidation of betaine aldehyde to the corresponding acid. This is Betaine aldehyde dehydrogenase from Rhizobium johnstonii (strain DSM 114642 / LMG 32736 / 3841) (Rhizobium leguminosarum bv. viciae).